The primary structure comprises 416 residues: MQLLTLGVNHHTAPLAIREQVAFGPDKLVQALHELTLSKRASEAAILSTCNRTELYVNTVSPDALSQWFADFHHLDVRELAPYLYTLPREKAAQHAFRVAAGLDSMVLGETQILGQMKQAVAAAEEAGTLGLLLHKLFQRTFSVAKEVRSSTEIGANSVSMAAAAVRLAERIFPSVKEQACLFIGAGEMIELCMTHFAAQHPRRMTVANRTTERARPLAERFNAGVIPLTALPDEVAAYDIIITSTASPLPILGKGMLERAIRQRRHRPIFIVDLAVPRDVEAEVADMNDVFLYSVDDLGQVVREGMDNRVAQVAQAEAIIETSVASFIHWMEGRELVPVIRGLRDAAERHRRHELDKAHKALARGDDPHAVLDAMSHGLANKFLHAPTHGLSHATPEERAELVRLISQLYGLHPE.

Substrate contacts are provided by residues 49–52 (TCNR), S105, 110–112 (ETQ), and Q116. The active-site Nucleophile is the C50. 185-190 (GAGEMI) is an NADP(+) binding site.

The protein belongs to the glutamyl-tRNA reductase family. As to quaternary structure, homodimer.

It catalyses the reaction (S)-4-amino-5-oxopentanoate + tRNA(Glu) + NADP(+) = L-glutamyl-tRNA(Glu) + NADPH + H(+). Its pathway is porphyrin-containing compound metabolism; protoporphyrin-IX biosynthesis; 5-aminolevulinate from L-glutamyl-tRNA(Glu): step 1/2. Functionally, catalyzes the NADPH-dependent reduction of glutamyl-tRNA(Glu) to glutamate 1-semialdehyde (GSA). This Thiobacillus denitrificans (strain ATCC 25259 / T1) protein is Glutamyl-tRNA reductase.